A 180-amino-acid chain; its full sequence is Acireductone dioxygenase (180 aa).

Positions 96, 98, 102, and 140 each coordinate Fe(2+). Ni(2+) is bound by residues His-96, His-98, Glu-102, and His-140.

Belongs to the acireductone dioxygenase (ARD) family. In terms of assembly, monomer. The cofactor is Fe(2+). Ni(2+) is required as a cofactor.

The enzyme catalyses 1,2-dihydroxy-5-(methylsulfanyl)pent-1-en-3-one + O2 = 3-(methylsulfanyl)propanoate + CO + formate + 2 H(+). It catalyses the reaction 1,2-dihydroxy-5-(methylsulfanyl)pent-1-en-3-one + O2 = 4-methylsulfanyl-2-oxobutanoate + formate + 2 H(+). It participates in amino-acid biosynthesis; L-methionine biosynthesis via salvage pathway; L-methionine from S-methyl-5-thio-alpha-D-ribose 1-phosphate: step 5/6. Catalyzes 2 different reactions between oxygen and the acireductone 1,2-dihydroxy-3-keto-5-methylthiopentene (DHK-MTPene) depending upon the metal bound in the active site. Fe-containing acireductone dioxygenase (Fe-ARD) produces formate and 2-keto-4-methylthiobutyrate (KMTB), the alpha-ketoacid precursor of methionine in the methionine recycle pathway. Ni-containing acireductone dioxygenase (Ni-ARD) produces methylthiopropionate, carbon monoxide and formate, and does not lie on the methionine recycle pathway. The polypeptide is Acireductone dioxygenase (Synechococcus sp. (strain WH7803)).